The following is a 112-amino-acid chain: 2Fe-2S ferredoxin (112 aa).

In terms of domain architecture, 2Fe-2S ferredoxin-type spans 5–107 (IKVTFIVNDG…GIKVRLPSAT (103 aa)). [2Fe-2S] cluster contacts are provided by cysteine 42, cysteine 48, cysteine 51, and cysteine 88.

The protein belongs to the adrenodoxin/putidaredoxin family. Requires [2Fe-2S] cluster as cofactor.

Functionally, ferredoxin are iron-sulfur proteins that transfer electrons in a wide variety of metabolic reactions. The protein is 2Fe-2S ferredoxin (fdxB) of Rickettsia felis (strain ATCC VR-1525 / URRWXCal2) (Rickettsia azadi).